Consider the following 506-residue polypeptide: Protein P7 (506 aa).

RNA-binding regions lie at residues Ile-128–Glu-249 and Asp-325–Ser-355.

Belongs to the phytoreovirus protein P7 family.

The protein resides in the virion. It localises to the host cytoplasm. In terms of biological role, probable component of the transcriptional machinery present in the inner capsid. Displays dsRNA binding activity and may play an important role in the sorting of viral RNA and virion assembly. Together with the RNA-directed RNA polymerase P1 and capping enzyme P5, forms an transcriptional complex positioned near the channels situated at each of the five-fold vertices of the core. This chain is Protein P7, found in Alopecurus aequalis (Barnyard grass).